Reading from the N-terminus, the 480-residue chain is tRNA-2-methylthio-N(6)-dimethylallyladenosine synthase (480 aa).

The region spanning 3 to 120 is the MTTase N-terminal domain; sequence KKLYIKTWGC…LPEMLNQLQH (118 aa). [4Fe-4S] cluster is bound by residues Cys12, Cys49, Cys83, Cys157, Cys161, and Cys164. The 233-residue stretch at 143–375 folds into the Radical SAM core domain; the sequence is KADGASAFVS…QEQITHQALR (233 aa). The TRAM domain maps to 378–441; it reads RQMLNTEQRV…ANSLRGELVR (64 aa).

Belongs to the methylthiotransferase family. MiaB subfamily. Monomer. [4Fe-4S] cluster serves as cofactor.

It localises to the cytoplasm. The enzyme catalyses N(6)-dimethylallyladenosine(37) in tRNA + (sulfur carrier)-SH + AH2 + 2 S-adenosyl-L-methionine = 2-methylsulfanyl-N(6)-dimethylallyladenosine(37) in tRNA + (sulfur carrier)-H + 5'-deoxyadenosine + L-methionine + A + S-adenosyl-L-homocysteine + 2 H(+). In terms of biological role, catalyzes the methylthiolation of N6-(dimethylallyl)adenosine (i(6)A), leading to the formation of 2-methylthio-N6-(dimethylallyl)adenosine (ms(2)i(6)A) at position 37 in tRNAs that read codons beginning with uridine. This chain is tRNA-2-methylthio-N(6)-dimethylallyladenosine synthase, found in Colwellia psychrerythraea (strain 34H / ATCC BAA-681) (Vibrio psychroerythus).